A 474-amino-acid chain; its full sequence is Aspartyl/glutamyl-tRNA(Asn/Gln) amidotransferase subunit B (474 aa).

It belongs to the GatB/GatE family. GatB subfamily. In terms of assembly, heterotrimer of A, B and C subunits.

The enzyme catalyses L-glutamyl-tRNA(Gln) + L-glutamine + ATP + H2O = L-glutaminyl-tRNA(Gln) + L-glutamate + ADP + phosphate + H(+). The catalysed reaction is L-aspartyl-tRNA(Asn) + L-glutamine + ATP + H2O = L-asparaginyl-tRNA(Asn) + L-glutamate + ADP + phosphate + 2 H(+). In terms of biological role, allows the formation of correctly charged Asn-tRNA(Asn) or Gln-tRNA(Gln) through the transamidation of misacylated Asp-tRNA(Asn) or Glu-tRNA(Gln) in organisms which lack either or both of asparaginyl-tRNA or glutaminyl-tRNA synthetases. The reaction takes place in the presence of glutamine and ATP through an activated phospho-Asp-tRNA(Asn) or phospho-Glu-tRNA(Gln). This Campylobacter curvus (strain 525.92) protein is Aspartyl/glutamyl-tRNA(Asn/Gln) amidotransferase subunit B.